Consider the following 163-residue polypeptide: 2-C-methyl-D-erythritol 2,4-cyclodiphosphate synthase (163 aa).

Residues Asp9 and His11 each contribute to the a divalent metal cation site. 4-CDP-2-C-methyl-D-erythritol 2-phosphate contacts are provided by residues 9–11 (DVH) and 36–37 (HS). Residue His44 participates in a divalent metal cation binding. 4-CDP-2-C-methyl-D-erythritol 2-phosphate contacts are provided by residues 58-60 (DIG), 63-67 (FPDDD), 134-137 (TTSE), Phe141, and Arg144.

Belongs to the IspF family. As to quaternary structure, homotrimer. The cofactor is a divalent metal cation.

It carries out the reaction 4-CDP-2-C-methyl-D-erythritol 2-phosphate = 2-C-methyl-D-erythritol 2,4-cyclic diphosphate + CMP. It functions in the pathway isoprenoid biosynthesis; isopentenyl diphosphate biosynthesis via DXP pathway; isopentenyl diphosphate from 1-deoxy-D-xylulose 5-phosphate: step 4/6. Functionally, involved in the biosynthesis of isopentenyl diphosphate (IPP) and dimethylallyl diphosphate (DMAPP), two major building blocks of isoprenoid compounds. Catalyzes the conversion of 4-diphosphocytidyl-2-C-methyl-D-erythritol 2-phosphate (CDP-ME2P) to 2-C-methyl-D-erythritol 2,4-cyclodiphosphate (ME-CPP) with a corresponding release of cytidine 5-monophosphate (CMP). This Halorhodospira halophila (strain DSM 244 / SL1) (Ectothiorhodospira halophila (strain DSM 244 / SL1)) protein is 2-C-methyl-D-erythritol 2,4-cyclodiphosphate synthase.